The sequence spans 311 residues: Pyrimidine-specific ribonucleoside hydrolase RihA (311 aa).

H240 is an active-site residue.

This sequence belongs to the IUNH family. RihA subfamily.

In terms of biological role, hydrolyzes with equal efficiency cytidine or uridine to ribose and cytosine or uracil, respectively. In Escherichia coli O81 (strain ED1a), this protein is Pyrimidine-specific ribonucleoside hydrolase RihA.